We begin with the raw amino-acid sequence, 147 residues long: MALKRIQKELMDLQRDPPAQCSAGPVGEDLFHWQATIMGPNDSPFQGGVFFLTIHFPTDYPFKPPKVAFTTKIYHPNINSNGSICLDILRSQWSPALTVSKVLLSICSLLCDPNPDDPLVPEIAHTYKADREKYNRLAREWTQKYAM.

Positions M1–M147 constitute a UBC core domain. Residue C85 is the Glycyl thioester intermediate of the active site.

Belongs to the ubiquitin-conjugating enzyme family. Interacts with map3k10/mlk2. At embryonic stages 28 to 35, expressed in the somites, eye primordia, otic vesicle and branchial arches. By stage 35, also weakly expressed in the pronephros.

It catalyses the reaction S-ubiquitinyl-[E1 ubiquitin-activating enzyme]-L-cysteine + [E2 ubiquitin-conjugating enzyme]-L-cysteine = [E1 ubiquitin-activating enzyme]-L-cysteine + S-ubiquitinyl-[E2 ubiquitin-conjugating enzyme]-L-cysteine.. The protein operates within protein modification; protein ubiquitination. In terms of biological role, catalyzes the covalent attachment of ubiquitin to other proteins. Regulates pronephros development, possibly by promoting ubiquitination and thus inactivation or degradation of map3k10/mlk2. The polypeptide is Ubiquitin-conjugating enzyme E2 D4 (ube2d4) (Xenopus laevis (African clawed frog)).